The chain runs to 494 residues: Zinc metalloproteinase/disintegrin (494 aa).

A signal peptide spans 1–20 (MIQVLLVTICLAVFPFQGSS). A propeptide spanning residues 21–193 (KTLKSGNVND…KKASHLVATS (173 aa)) is cleaved from the precursor. Residues 201 to 396 (RYVQLVIVAD…HNPPCILNQA (196 aa)) form the Peptidase M12B domain. Disulfide bonds link Cys-311–Cys-391, Cys-351–Cys-375, and Cys-353–Cys-358. His-336 is a Zn(2+) binding site. Residue Glu-337 is part of the active site. Residues His-340 and His-346 each contribute to the Zn(2+) site. A propeptide spanning residues 410–431 (ELLQNSVNPCYDPVTCQPKEKE) is cleaved from the precursor. Positions 417–478 (NPCYDPVTCQ…DCPRNPYKGE (62 aa)) constitute a Disintegrin domain. 4 disulfides stabilise this stretch: Cys-433–Cys-442, Cys-438–Cys-463, Cys-439–Cys-468, and Cys-451–Cys-470. Residues 455–457 (RGD) carry the Cell attachment site motif. Residues 482–494 (MEWPAPAKGSVLM) constitute a propeptide that is removed on maturation.

The protein belongs to the venom metalloproteinase (M12B) family. P-II subfamily. P-IIa sub-subfamily. As to quaternary structure, monomer (disintegrin). In terms of tissue distribution, expressed by the venom gland.

It is found in the secreted. Functionally, impairs hemostasis in the envenomed animal. Inhibits ADP-induced platelet aggregation (IC(50)=168 nM). Inhibits alpha-5/beta-1 (ITGA5/ITGB1) integrin and induces the expression of a ligand-induced binding site epitope on beta-1 integrin subunit. Has a direct chemotactic stimulus on human neutrophils in vitro. This chain is Zinc metalloproteinase/disintegrin, found in Echis ocellatus (Ocellated saw-scaled viper).